A 74-amino-acid chain; its full sequence is Exodeoxyribonuclease 7 small subunit (74 aa).

It belongs to the XseB family. As to quaternary structure, heterooligomer composed of large and small subunits.

It localises to the cytoplasm. The catalysed reaction is Exonucleolytic cleavage in either 5'- to 3'- or 3'- to 5'-direction to yield nucleoside 5'-phosphates.. Its function is as follows. Bidirectionally degrades single-stranded DNA into large acid-insoluble oligonucleotides, which are then degraded further into small acid-soluble oligonucleotides. The protein is Exodeoxyribonuclease 7 small subunit of Actinobacillus pleuropneumoniae serotype 5b (strain L20).